An 834-amino-acid polypeptide reads, in one-letter code: MGFLTKKERRVPDLSRYDYHYQNKPAVDSSKYYVPREYGGKRLSASAAAAAIYTNPNPNATGVSRSYSLMHSYNPAAARQPPAGRTYSLRSDRASSITSNSRRPAAGKAQVRRASTQQRRASVDQELGTGVNQPRTNSITVTTTKVRDPQGRTKSITKKTVRRINGYEVVETTTTTTTTEPLPTQNGKMPANMDLVSVEDGTDVEEEHDDGLPSPQAHFDEFSGDFVAEDDLSSEVLQHQQQQYIEDIVEEETEEEEDPGHTGTKRLPGEFNEPPRTNIAARRSNSLTGSLSSLGAKKTISEEVPLDQTSSVSKFSDAMEYIPPTTTTAKPKKSNLRNSMTARKLAQPQQGQNQRRTVSFTQGSIDHMNTTKKKKQPLTEQEMYLQALEVAKKKVYKTDDPAVVGNAANNSNKRVSTMGKRMTLRDSAPVPRSSSMMMNKFHDQGSARNNVAQQQTDVRRSKSMTGSAVPPQAGKKKLTDEEMYEKALEIAQKRYNDLVSADTAAVGAASVGAASAATPVASTAPKKSGFKQRFTKTFHTDDNKSKINNASAGGMVSGGAAAVEVAPGVTTTDPVVAENVNEASQIERMDNVEMASASAANEYAAPAAGFRATSAPLYQSRSAEPVGAYAAPDAPISKYKIVDKILKFAQSNYGYQAHDDEEAAMVAPASAPATAPAGTSMAQPVVVPVERRSSVGKHGNTTTLPVETPLADNASESSFRHTHPQEQPVPLSQIEKKISVVSETGSRKAAPAATAAKTPATAPAMSYGTAKTPFIDIDAVDALSGHVPFEEATRHASVATAATAATGGTTGTAATTGTGTSKKKSFLRKLFGRK.

4 disordered regions span residues 75-136 (PAAA…QPRT), 251-291 (EETE…TGSL), 343-378 (RKLA…KQPL), and 458-479 (VRRS…KKLT). Residues 343 to 368 (RKLAQPQQGQNQRRTVSFTQGSIDHM) show a composition bias toward polar residues.

Its subcellular location is the cell membrane. In terms of biological role, may be involved in the control of meiotic sister-chromatid recombination. This is Meiotic sister-chromatid recombination protein 3 (MSC3) from Candida glabrata (strain ATCC 2001 / BCRC 20586 / JCM 3761 / NBRC 0622 / NRRL Y-65 / CBS 138) (Yeast).